The chain runs to 242 residues: Biosynthetic peptidoglycan transglycosylase (242 aa).

The chain crosses the membrane as a helical span at residues 19–39 (LLLACAVLWGGGVALFSIVPV).

This sequence belongs to the glycosyltransferase 51 family.

It is found in the cell inner membrane. The catalysed reaction is [GlcNAc-(1-&gt;4)-Mur2Ac(oyl-L-Ala-gamma-D-Glu-L-Lys-D-Ala-D-Ala)](n)-di-trans,octa-cis-undecaprenyl diphosphate + beta-D-GlcNAc-(1-&gt;4)-Mur2Ac(oyl-L-Ala-gamma-D-Glu-L-Lys-D-Ala-D-Ala)-di-trans,octa-cis-undecaprenyl diphosphate = [GlcNAc-(1-&gt;4)-Mur2Ac(oyl-L-Ala-gamma-D-Glu-L-Lys-D-Ala-D-Ala)](n+1)-di-trans,octa-cis-undecaprenyl diphosphate + di-trans,octa-cis-undecaprenyl diphosphate + H(+). It functions in the pathway cell wall biogenesis; peptidoglycan biosynthesis. Its function is as follows. Peptidoglycan polymerase that catalyzes glycan chain elongation from lipid-linked precursors. In Klebsiella oxytoca, this protein is Biosynthetic peptidoglycan transglycosylase.